A 450-amino-acid polypeptide reads, in one-letter code: Casein kinase 1-like protein 1 (450 aa).

The 270-residue stretch at 9-278 folds into the Protein kinase domain; that stretch reads FRLGRKIGSG…LKRIFRDLFI (270 aa). ATP is bound by residues 15 to 23 and lysine 38; that span reads IGSGSFGEI. The active-site Proton acceptor is aspartate 128. The interval 311–450 is disordered; that stretch reads AVGTSAALPP…LQVSDEHHPH (140 aa). Basic and acidic residues predominate over residues 328–342; that stretch reads YTGEEEGRPHMESSR. Over residues 349–365 the composition is skewed to polar residues; it reads LDNSGNISNQPTSSSAR. The segment covering 371-382 has biased composition (low complexity); it reads SSSLFAQSAGSS.

The protein belongs to the protein kinase superfamily. CK1 Ser/Thr protein kinase family. Casein kinase I subfamily. In terms of assembly, monomer. Autophosphorylated. In terms of tissue distribution, expressed in flowers.

The protein resides in the cytoplasm. The protein localises to the cell junction. It is found in the plasmodesma. The enzyme catalyses L-seryl-[protein] + ATP = O-phospho-L-seryl-[protein] + ADP + H(+). The catalysed reaction is L-threonyl-[protein] + ATP = O-phospho-L-threonyl-[protein] + ADP + H(+). Casein kinases are operationally defined by their preferential utilization of acidic proteins such as caseins as substrates. It can phosphorylate a large number of proteins. This is Casein kinase 1-like protein 1 from Arabidopsis thaliana (Mouse-ear cress).